Here is a 609-residue protein sequence, read N- to C-terminus: Phosphoenolpyruvate carboxykinase [GTP] (609 aa).

Substrate-binding positions include arginine 81 and 220–222 (YGG). 2 residues coordinate Mn(2+): lysine 229 and histidine 249. Residue serine 271 coordinates substrate. 272–277 (ACGKTN) lines the GTP pocket. Cysteine 273 is an active-site residue. Aspartate 296 provides a ligand contact to Mn(2+). 387–389 (NSR) contacts substrate. GTP is bound by residues arginine 389, arginine 420, and 515-518 (FGEN).

Belongs to the phosphoenolpyruvate carboxykinase [GTP] family. In terms of assembly, monomer. Mn(2+) is required as a cofactor.

The protein localises to the cytoplasm. It carries out the reaction oxaloacetate + GTP = phosphoenolpyruvate + GDP + CO2. The protein operates within carbohydrate biosynthesis; gluconeogenesis. Functionally, catalyzes the conversion of oxaloacetate (OAA) to phosphoenolpyruvate (PEP), the rate-limiting step in the metabolic pathway that produces glucose from lactate and other precursors derived from the citric acid cycle. The polypeptide is Phosphoenolpyruvate carboxykinase [GTP] (Mycobacterium ulcerans (strain Agy99)).